The sequence spans 602 residues: Elongation factor 4 (602 aa).

A tr-type G domain is found at 7 to 189; the sequence is SKIRNFCIIA…AIVRRVPPPQ (183 aa). GTP is bound by residues 19–24 and 136–139; these read DHGKST and NKVD.

It belongs to the TRAFAC class translation factor GTPase superfamily. Classic translation factor GTPase family. LepA subfamily.

The protein resides in the cell inner membrane. It catalyses the reaction GTP + H2O = GDP + phosphate + H(+). Its function is as follows. Required for accurate and efficient protein synthesis under certain stress conditions. May act as a fidelity factor of the translation reaction, by catalyzing a one-codon backward translocation of tRNAs on improperly translocated ribosomes. Back-translocation proceeds from a post-translocation (POST) complex to a pre-translocation (PRE) complex, thus giving elongation factor G a second chance to translocate the tRNAs correctly. Binds to ribosomes in a GTP-dependent manner. The sequence is that of Elongation factor 4 from Prochlorococcus marinus (strain MIT 9215).